Consider the following 138-residue polypeptide: Putative pre-16S rRNA nuclease (138 aa).

It belongs to the YqgF nuclease family.

Its subcellular location is the cytoplasm. Functionally, could be a nuclease involved in processing of the 5'-end of pre-16S rRNA. The chain is Putative pre-16S rRNA nuclease from Escherichia coli O157:H7.